Here is a 2272-residue protein sequence, read N- to C-terminus: Voltage-dependent R-type calcium channel subunit alpha-1E (2272 aa).

The tract at residues 1 to 40 (MARFGEAVVVGRPGSGDGDSDQSRNRQGTPVPASGPAAAY) is disordered. Topologically, residues 1-90 (MARFGEAVVV…KYAKKLIDWP (90 aa)) are cytoplasmic. 2 positions are modified to phosphoserine: Ser-15 and Ser-20. The I repeat unit spans residues 77–355 (NIVRKYAKKL…LVLGVLSGEF (279 aa)). A helical transmembrane segment spans residues 91 to 109 (PFEYMILATIIANCIVLAL). The Extracellular portion of the chain corresponds to 110-128 (EQHLPEDDKTPMSRRLEKT). The helical transmembrane segment at 129 to 147 (EPYFIGIFCFEAGIKIVAL) threads the bilayer. Topologically, residues 148–159 (GFIFHKGSYLRN) are cytoplasmic. A helical membrane pass occupies residues 160–174 (GWNVMDFIVVLSGIL). At 175–186 (ATAGTHFNTHVD) the chain is on the extracellular side. A helical membrane pass occupies residues 187 to 206 (LRALRAVRVLRPLKLVSGIP). At 207-224 (SLQIVLKSIMKAMVPLLQ) the chain is on the cytoplasmic side. Residues 225-245 (IGLLLFFAILMFAIIGLEFYS) traverse the membrane as a helical segment. The Extracellular segment spans residues 246–327 (GKLHRACFMN…NTNDALGATW (82 aa)). N-linked (GlcNAc...) asparagine glycosylation is present at Asn-255. Residues 328-351 (NWLYFIPLIIIGSFFVLNLVLGVL) traverse the membrane as a helical segment. Residues 352-477 (SGEFAKERER…ISIRHMVKSQ (126 aa)) lie on the Cytoplasmic side of the membrane. Residues 375–392 (QQIERELNGYRAWIDKAE) form a binding to the beta subunit region. Asp-427 provides a ligand contact to Ca(2+). Residue Ser-428 is modified to Phosphoserine. Residues Ser-429, Glu-431, Cys-433, and Ser-438 each contribute to the Ca(2+) site. The residue at position 441 (Thr-441) is a Phosphothreonine. One copy of the II repeat lies at 463 to 707 (ERLLRISIRH…VFLAIAVDNL (245 aa)). The chain crosses the membrane as a helical span at residues 478 to 497 (VFYWIVLSVVALNTACVAIV). The Extracellular segment spans residues 498–510 (HHNQPQWLTHLLY). The helical transmembrane segment at 511 to 530 (YAEFLFLGLFLLEMSLKMYG) threads the bilayer. Residues 531–539 (MGPRLYFHS) lie on the Cytoplasmic side of the membrane. A helical membrane pass occupies residues 540–558 (SFNCFDFGVTVGSIFEVVW). Over 559–568 (AIFRPGTSFG) the chain is Extracellular. A helical membrane pass occupies residues 569 to 587 (ISVLRALRLLRIFKITKYW). Residues 588 to 606 (ASLRNLVVSLMSSMKSIIS) lie on the Cytoplasmic side of the membrane. The chain crosses the membrane as a helical span at residues 607 to 626 (LLFLLFLFIVVFALLGMQLF). The Extracellular segment spans residues 627-679 (GGRFNFNDGTPSANFDTFPAAIMTVFQILTGEDWNEVMYNGIRSQGGVSSGMW). Residues 680-704 (SAIYFIVLTLFGNYTLLNVFLAIAV) traverse the membrane as a helical segment. At 705 to 1150 (DNLANAQELT…TTNPIRRACH (446 aa)) the chain is on the cytoplasmic side. The tract at residues 730–777 (LQKAKEVSPMSAPNMPSIERDRRRRHHMSMWEPRSSHLRERRRRHHMS) is disordered. Phosphoserine is present on residues Ser-737, Ser-746, Ser-794, Ser-816, and Ser-856. 2 disordered regions span residues 854 to 994 (GGSL…VPRG) and 1091 to 1127 (SNKT…RETG). The segment covering 914–927 (RHRQSQRRSRHRRV) has biased composition (basic residues). A compositionally biased stretch (low complexity) spans 934 to 946 (SASASRSRSASQE). The residue at position 948 (Ser-948) is a Phosphoserine. Basic and acidic residues-rich tracts occupy residues 956 to 985 (EGEK…DLRR) and 1094 to 1105 (TDGEASPLKEAE). Ser-1099 carries the post-translational modification Phosphoserine. The III repeat unit spans residues 1143 to 1429 (NPIRRACHYI…IFVALIIITF (287 aa)). A helical membrane pass occupies residues 1151-1167 (YIVNLRYFEMCILLVIA). Residues 1168–1191 (ASSIALAAEDPVLTNSERNKVLRY) are Extracellular-facing. Residues 1192-1211 (FDYVFTGVFTFEMVIKMIDQ) form a helical membrane-spanning segment. Residues 1212-1219 (GLILQDGS) are Cytoplasmic-facing. A helical membrane pass occupies residues 1220 to 1242 (YFRDLWNILDFVVVVGALVAFAL). At 1243–1256 (ANALGTNKGRDIKT) the chain is on the extracellular side. Residues 1257–1274 (IKSLRVLRVLRPLKTIKR) form a helical membrane-spanning segment. Residues 1275 to 1293 (LPKLKAVFDCVVTSLKNVF) are Cytoplasmic-facing. A helical membrane pass occupies residues 1294-1313 (NILIVYKLFMFIFAVIAVQL). Over 1314–1400 (FKGKFFYCTD…DRGPSRSNRM (87 aa)) the chain is Extracellular. A helical transmembrane segment spans residues 1401-1424 (EMSIFYVVYFVVFPFFFVNIFVAL). Topologically, residues 1425-1481 (IIITFQEQGDKMMEECSLEKNERACIDFAISAKPLTRYMPQNRHTFQYRVWHFVVSP) are cytoplasmic. An IV repeat occupies 1466-1729 (NRHTFQYRVW…LFVAVIMDNF (264 aa)). A helical membrane pass occupies residues 1482–1500 (SFEYTIMAMIALNTVVLMM). Residues 1501–1515 (KYYTAPCTYELALKY) are Extracellular-facing. The chain crosses the membrane as a helical span at residues 1516-1535 (LNIAFTMVFSLECVLKVIAF). Residues 1536–1543 (GFLNYFRD) lie on the Cytoplasmic side of the membrane. Residues 1544–1562 (TWNIFDFITVIGSITEIIL) form a helical membrane-spanning segment. The Extracellular segment spans residues 1563-1573 (TDSKLVNTSGF). Asn-1569 carries N-linked (GlcNAc...) asparagine glycosylation. Residues 1574–1592 (NMSFLKLFRAARLIKLLRQ) traverse the membrane as a helical segment. The Cytoplasmic portion of the chain corresponds to 1593–1611 (GYTIRILLWTFVQSFKALP). The helical transmembrane segment at 1612 to 1631 (YVCLLIAMLFFIYAIIGMQV) threads the bilayer. The Extracellular segment spans residues 1632–1700 (FGNIKLDEES…QNESERCGTD (69 aa)). An N-linked (GlcNAc...) asparagine glycan is attached at Asn-1692. The chain crosses the membrane as a helical span at residues 1701–1726 (LAYVYFVSFIFFCSFLMLNLFVAVIM). Topologically, residues 1727 to 2272 (DNFEYLTRDS…LSDTEEDDKC (546 aa)) are cytoplasmic. Residues 1742–1777 (HHLDEFVRVWAEYDRAACGRIHYTEMYEMLTLMSPP) form the EF-hand domain. Asp-1755, Arg-1761, and Glu-1766 together coordinate Ca(2+). Residues 2021–2186 (SAHRLNSDSG…QQGQHPSPQH (166 aa)) are disordered. Residues 2025–2045 (LNSDSGHKSDTHRSGGRERGR) are compositionally biased toward basic and acidic residues. A phosphoserine mark is found at Ser-2054 and Ser-2073. The span at 2061–2078 (NSEERGTQADWESPERRQ) shows a compositional bias: basic and acidic residues. The span at 2097–2112 (SLSESSIPSISDTSTP) shows a compositional bias: low complexity. The span at 2155–2174 (LASQALESNSACLTESSNSL) shows a compositional bias: polar residues. Low complexity predominate over residues 2175 to 2186 (HPQQGQHPSPQH).

This sequence belongs to the calcium channel alpha-1 subunit (TC 1.A.1.11) family. CACNA1E subfamily. Interacts with EFHC1. Voltage-dependent calcium channels are multisubunit complexes, consisting of alpha-1, alpha-2, beta and delta subunits in a 1:1:1:1 ratio. The channel activity is directed by the pore-forming and voltage-sensitive alpha-1 subunit. In many cases, this subunit is sufficient to generate voltage-sensitive calcium channel activity. The auxiliary subunits beta and alpha-2/delta linked by a disulfide bridge regulate the channel activity. As to expression, expressed in neuronal tissues, retina, spleen, and pancreatic islet cells.

Its subcellular location is the membrane. The enzyme catalyses Ca(2+)(in) = Ca(2+)(out). Functionally, voltage-sensitive calcium channels (VSCC) mediate the entry of calcium ions into excitable cells and are also involved in a variety of calcium-dependent processes, including muscle contraction, hormone or neurotransmitter release, gene expression, cell motility, cell division and cell death. The isoform alpha-1E gives rise to R-type calcium currents. R-type calcium channels belong to the 'high-voltage activated' (HVA) group and are blocked by nickel. They are however insensitive to dihydropyridines (DHP). Calcium channels containing alpha-1E subunit could be involved in the modulation of firing patterns of neurons which is important for information processing. This chain is Voltage-dependent R-type calcium channel subunit alpha-1E (Cacna1e), found in Mus musculus (Mouse).